We begin with the raw amino-acid sequence, 738 residues long: Polyribonucleotide nucleotidyltransferase (738 aa).

Mg(2+)-binding residues include aspartate 514 and aspartate 520. Residues 580–639 (PRIITVKIPVDKIGEVIGPKGKMINQIQEDTGAEITIEDDGTIYIGAQVGSQAEAARATI) form the KH domain. One can recognise an S1 motif domain in the interval 651–723 (GERYLGTVVK…SRGKLSLIPV (73 aa)).

Belongs to the polyribonucleotide nucleotidyltransferase family. The cofactor is Mg(2+).

The protein resides in the cytoplasm. It carries out the reaction RNA(n+1) + phosphate = RNA(n) + a ribonucleoside 5'-diphosphate. Involved in mRNA degradation. Catalyzes the phosphorolysis of single-stranded polyribonucleotides processively in the 3'- to 5'-direction. This Streptomyces avermitilis (strain ATCC 31267 / DSM 46492 / JCM 5070 / NBRC 14893 / NCIMB 12804 / NRRL 8165 / MA-4680) protein is Polyribonucleotide nucleotidyltransferase.